A 257-amino-acid polypeptide reads, in one-letter code: Protein orai-2 (257 aa).

4 helical membrane passes run 67–84 (TSAL…EVQL), 95–115 (LIAF…ALLI), 149–169 (LAWG…VVLL), and 199–219 (AALV…VFTI).

Belongs to the Orai family.

Its subcellular location is the membrane. In terms of biological role, ca(2+) release-activated Ca(2+)-like (CRAC-like) channel subunit which mediates Ca(2+) influx and increase in Ca(2+)-selective current by synergy with the Ca(2+) sensor, STIM1. This Gallus gallus (Chicken) protein is Protein orai-2 (ORAI2).